The sequence spans 396 residues: NADH-quinone oxidoreductase subunit D (396 aa).

It belongs to the complex I 49 kDa subunit family. As to quaternary structure, NDH-1 is composed of 14 different subunits. Subunits NuoB, C, D, E, F, and G constitute the peripheral sector of the complex.

It is found in the cell inner membrane. The catalysed reaction is a quinone + NADH + 5 H(+)(in) = a quinol + NAD(+) + 4 H(+)(out). NDH-1 shuttles electrons from NADH, via FMN and iron-sulfur (Fe-S) centers, to quinones in the respiratory chain. The immediate electron acceptor for the enzyme in this species is believed to be ubiquinone. Couples the redox reaction to proton translocation (for every two electrons transferred, four hydrogen ions are translocated across the cytoplasmic membrane), and thus conserves the redox energy in a proton gradient. The polypeptide is NADH-quinone oxidoreductase subunit D (Bartonella tribocorum (strain CIP 105476 / IBS 506)).